A 309-amino-acid polypeptide reads, in one-letter code: Methionyl-tRNA formyltransferase (309 aa).

Residue 107 to 110 participates in (6S)-5,6,7,8-tetrahydrofolate binding; that stretch reads SLLP.

It belongs to the Fmt family.

The enzyme catalyses L-methionyl-tRNA(fMet) + (6R)-10-formyltetrahydrofolate = N-formyl-L-methionyl-tRNA(fMet) + (6S)-5,6,7,8-tetrahydrofolate + H(+). Its function is as follows. Attaches a formyl group to the free amino group of methionyl-tRNA(fMet). The formyl group appears to play a dual role in the initiator identity of N-formylmethionyl-tRNA by promoting its recognition by IF2 and preventing the misappropriation of this tRNA by the elongation apparatus. This chain is Methionyl-tRNA formyltransferase, found in Borrelia duttonii (strain Ly).